The following is a 237-amino-acid chain: Uridylate kinase (237 aa).

ATP is bound at residue 12–15 (KLSG). Residues 20–25 (GENGYG) are involved in allosteric activation by GTP. Position 54 (Gly-54) interacts with UMP. Gly-55 and Arg-59 together coordinate ATP. UMP is bound by residues Asp-72 and 133–140 (TGNPYFST). Residues Tyr-166 and Asp-169 each coordinate ATP.

The protein belongs to the UMP kinase family. As to quaternary structure, homohexamer.

The protein localises to the cytoplasm. It catalyses the reaction UMP + ATP = UDP + ADP. The protein operates within pyrimidine metabolism; CTP biosynthesis via de novo pathway; UDP from UMP (UMPK route): step 1/1. Its activity is regulated as follows. Allosterically activated by GTP. Inhibited by UTP. Catalyzes the reversible phosphorylation of UMP to UDP. The polypeptide is Uridylate kinase (Clostridium tetani (strain Massachusetts / E88)).